The following is a 276-amino-acid chain: Acyl-[acyl-carrier-protein]--UDP-N-acetylglucosamine O-acyltransferase (276 aa).

It belongs to the transferase hexapeptide repeat family. LpxA subfamily. As to quaternary structure, homotrimer.

It localises to the cytoplasm. It catalyses the reaction a (3R)-hydroxyacyl-[ACP] + UDP-N-acetyl-alpha-D-glucosamine = a UDP-3-O-[(3R)-3-hydroxyacyl]-N-acetyl-alpha-D-glucosamine + holo-[ACP]. The protein operates within glycolipid biosynthesis; lipid IV(A) biosynthesis; lipid IV(A) from (3R)-3-hydroxytetradecanoyl-[acyl-carrier-protein] and UDP-N-acetyl-alpha-D-glucosamine: step 1/6. Its function is as follows. Involved in the biosynthesis of lipid A, a phosphorylated glycolipid that anchors the lipopolysaccharide to the outer membrane of the cell. In Rippkaea orientalis (strain PCC 8801 / RF-1) (Cyanothece sp. (strain PCC 8801)), this protein is Acyl-[acyl-carrier-protein]--UDP-N-acetylglucosamine O-acyltransferase.